Reading from the N-terminus, the 492-residue chain is Putative BTB/POZ domain and WD-repeat protein R786 (492 aa).

The BTB domain maps to 16-86; sequence TDVEIVLIDE…FYGQIVDSTN (71 aa). WD repeat units follow at residues 241–281 and 286–325; these read QSSC…IKIK and LINR…SKGI.

This sequence belongs to the mimivirus BTB/WD family.

This Acanthamoeba polyphaga (Amoeba) protein is Putative BTB/POZ domain and WD-repeat protein R786.